Consider the following 602-residue polypeptide: Elongation factor 4 (602 aa).

Positions 8-190 (DLIRNFSIVA…AIVHRLPPPK (183 aa)) constitute a tr-type G domain. GTP is bound by residues 20-25 (DHGKST) and 137-140 (NKID).

The protein belongs to the TRAFAC class translation factor GTPase superfamily. Classic translation factor GTPase family. LepA subfamily.

Its subcellular location is the cell inner membrane. The enzyme catalyses GTP + H2O = GDP + phosphate + H(+). Its function is as follows. Required for accurate and efficient protein synthesis under certain stress conditions. May act as a fidelity factor of the translation reaction, by catalyzing a one-codon backward translocation of tRNAs on improperly translocated ribosomes. Back-translocation proceeds from a post-translocation (POST) complex to a pre-translocation (PRE) complex, thus giving elongation factor G a second chance to translocate the tRNAs correctly. Binds to ribosomes in a GTP-dependent manner. This chain is Elongation factor 4, found in Cereibacter sphaeroides (strain ATCC 17023 / DSM 158 / JCM 6121 / CCUG 31486 / LMG 2827 / NBRC 12203 / NCIMB 8253 / ATH 2.4.1.) (Rhodobacter sphaeroides).